The primary structure comprises 277 residues: Putative phosphoenolpyruvate synthase regulatory protein (277 aa).

157-164 provides a ligand contact to ADP; sequence GVSRCGKT.

This sequence belongs to the pyruvate, phosphate/water dikinase regulatory protein family. PSRP subfamily.

The catalysed reaction is [pyruvate, water dikinase] + ADP = [pyruvate, water dikinase]-phosphate + AMP + H(+). It catalyses the reaction [pyruvate, water dikinase]-phosphate + phosphate + H(+) = [pyruvate, water dikinase] + diphosphate. Its function is as follows. Bifunctional serine/threonine kinase and phosphorylase involved in the regulation of the phosphoenolpyruvate synthase (PEPS) by catalyzing its phosphorylation/dephosphorylation. In Citrobacter koseri (strain ATCC BAA-895 / CDC 4225-83 / SGSC4696), this protein is Putative phosphoenolpyruvate synthase regulatory protein.